A 322-amino-acid polypeptide reads, in one-letter code: Autophagy protein 5 (322 aa).

Lys158 is covalently cross-linked (Glycyl lysine isopeptide (Lys-Gly) (interchain with G-Cter in atg12)).

It belongs to the ATG5 family. As to quaternary structure, conjugated with atg12. Conjugated to atg12; which is essential for autophagy.

It localises to the preautophagosomal structure membrane. Functionally, involved in cytoplasm to vacuole transport (Cvt) and autophagic vesicle formation. Autophagy is essential for maintenance of amino acid levels and protein synthesis under nitrogen starvation. Required for selective autophagic degradation of the nucleus (nucleophagy). Also required for mitophagy, which eliminates defective or superfluous mitochondria in order to fulfill cellular energy requirements and prevent excess ROS production. Conjugation with atg12, through a ubiquitin-like conjugating system involving atg7 as an E1-like activating enzyme and atg10 as an E2-like conjugating enzyme, is essential for its function. The atg12-atg5 conjugate acts as an E3-like enzyme which is required for lipidation of atg8 and atg8 association to the vesicle membranes. The chain is Autophagy protein 5 (atg5) from Aspergillus oryzae (strain ATCC 42149 / RIB 40) (Yellow koji mold).